Consider the following 204-residue polypeptide: Superoxide dismutase [Mn] (204 aa).

His-29, His-84, Asp-167, and His-171 together coordinate Mn(2+).

This sequence belongs to the iron/manganese superoxide dismutase family. Homotetramer. The cofactor is Mn(2+).

It carries out the reaction 2 superoxide + 2 H(+) = H2O2 + O2. In terms of biological role, destroys superoxide anion radicals which are normally produced within the cells and which are toxic to biological systems. The polypeptide is Superoxide dismutase [Mn] (sodA) (Thermus aquaticus).